Consider the following 600-residue polypeptide: Elongation factor 4 (600 aa).

Positions 5–187 constitute a tr-type G domain; sequence KYIRNFSIIA…AIVNKLPPPK (183 aa). GTP-binding positions include 17-22 and 134-137; these read DHGKST and NKID.

Belongs to the TRAFAC class translation factor GTPase superfamily. Classic translation factor GTPase family. LepA subfamily.

The protein localises to the cell inner membrane. The catalysed reaction is GTP + H2O = GDP + phosphate + H(+). In terms of biological role, required for accurate and efficient protein synthesis under certain stress conditions. May act as a fidelity factor of the translation reaction, by catalyzing a one-codon backward translocation of tRNAs on improperly translocated ribosomes. Back-translocation proceeds from a post-translocation (POST) complex to a pre-translocation (PRE) complex, thus giving elongation factor G a second chance to translocate the tRNAs correctly. Binds to ribosomes in a GTP-dependent manner. The polypeptide is Elongation factor 4 (Rickettsia bellii (strain OSU 85-389)).